A 203-amino-acid polypeptide reads, in one-letter code: Glycerol-3-phosphate acyltransferase (203 aa).

Helical transmembrane passes span 4–24, 56–76, 80–100, 115–135, and 149–169; these read IAYLLILGAYLLGSISSAVIF, LGVLMADILKGMLPVSLGFYL, ISVIGFIALAACLGHIFPVFF, IIPMGYSVAGLAVGTWLFVFL, and LIVPLYIWWFSSELTFPVALV.

This sequence belongs to the PlsY family. As to quaternary structure, probably interacts with PlsX.

It is found in the cell inner membrane. The enzyme catalyses an acyl phosphate + sn-glycerol 3-phosphate = a 1-acyl-sn-glycero-3-phosphate + phosphate. Its pathway is lipid metabolism; phospholipid metabolism. In terms of biological role, catalyzes the transfer of an acyl group from acyl-phosphate (acyl-PO(4)) to glycerol-3-phosphate (G3P) to form lysophosphatidic acid (LPA). This enzyme utilizes acyl-phosphate as fatty acyl donor, but not acyl-CoA or acyl-ACP. The chain is Glycerol-3-phosphate acyltransferase from Glaesserella parasuis serovar 5 (strain SH0165) (Haemophilus parasuis).